A 515-amino-acid chain; its full sequence is FADH(2)-dependent monooxygenase TftD (515 aa).

Position 100-104 (100-104 (RLPDA)) interacts with substrate. FAD-binding positions include 151-153 (LNF), 157-160 (QTDR), and Thr-192. 203–204 (GC) is a substrate binding site. An FAD-binding site is contributed by 457-460 (TMTR).

The protein belongs to the FADH(2)-utilizing monooxygenase family. In terms of assembly, homotetramer. The chlorophenol-4-monooxygenase is composed of an oxygenase component TftD and a reductase component TftC.

It participates in xenobiotic degradation. Its function is as follows. Oxygenase component of a two-component system that degrades 2,4,5-trichlorophenol. Uses FADH(2) supplied by TftC to oxidize 2,4,5-trichlorophenol (2,4,5-TCP) to 2,5-dichloro-p-benzoquinone, which is chemically reduced to 2,5-dichloro-p-hydroquinone (2,5-DiCHQ). Then, TftD oxidizes the latter to 5-chloro-2-hydroxy-p-benzoquinone. This is FADH(2)-dependent monooxygenase TftD (tftD) from Burkholderia cepacia (Pseudomonas cepacia).